Reading from the N-terminus, the 498-residue chain is Glycerol kinase (498 aa).

T12 provides a ligand contact to ADP. ATP is bound by residues T12, T13, and S14. Residue T12 participates in sn-glycerol 3-phosphate binding. ADP is bound at residue R16. Sn-glycerol 3-phosphate contacts are provided by R82, E83, Y134, and D241. Residues R82, E83, Y134, D241, and Q242 each coordinate glycerol. ADP-binding residues include T263 and G310. ATP is bound by residues T263, G310, Q314, and G411. Positions 411 and 415 each coordinate ADP.

It belongs to the FGGY kinase family.

The catalysed reaction is glycerol + ATP = sn-glycerol 3-phosphate + ADP + H(+). It functions in the pathway polyol metabolism; glycerol degradation via glycerol kinase pathway; sn-glycerol 3-phosphate from glycerol: step 1/1. Inhibited by fructose 1,6-bisphosphate (FBP). Functionally, key enzyme in the regulation of glycerol uptake and metabolism. Catalyzes the phosphorylation of glycerol to yield sn-glycerol 3-phosphate. The sequence is that of Glycerol kinase from Herminiimonas arsenicoxydans.